The primary structure comprises 859 residues: DNA mismatch repair protein MutS (859 aa).

618-625 (GPNMGGKS) contributes to the ATP binding site.

It belongs to the DNA mismatch repair MutS family.

In terms of biological role, this protein is involved in the repair of mismatches in DNA. It is possible that it carries out the mismatch recognition step. This protein has a weak ATPase activity. The chain is DNA mismatch repair protein MutS from Shewanella sediminis (strain HAW-EB3).